The sequence spans 437 residues: MHIVVVGLNYRTAPVEVRERFSFAEKDMPQALQELLRTKSVLEGVIIATCNRTEIYVVVDRLHMCGYFIRSFMERWFGVPREEFTRHLYMYEDEQAVRHLFRVACGLDSMVLGETQILGQVKSAFLLSQRQKGTGTWFNMLFKQAVTLGKRAHSETAIGQSAVSISYAAVELGKRIFGSFSGKRVLILGAGKMSELTAKHLSGGGADEVIVANRTYARAQELAAKFDGTPCTMQEAMERLADVDILISSTGAEGIRDHVGQVERSMKRRPDRPLFMIDIAVPRDIEPEIGVLENVFLYDIDDLEGIVENNLEMRRAEAVKIDKMIEEEMQVFANWLQTLGVKPVIRALQEKAAHIHESTLDSMFNKLPELDERQRKVIRRLTKSILNQMMHDPINRIKEMAGGKQGAEALEMFTQIFALEKHLEAGAPVGRGKRRLP.

Residues 49 to 52, Ser-109, 114 to 116, and Gln-120 contribute to the substrate site; these read TCNR and ETQ. Cys-50 serves as the catalytic Nucleophile. 189–194 is a binding site for NADP(+); it reads GAGKMS.

Belongs to the glutamyl-tRNA reductase family. As to quaternary structure, homodimer.

The enzyme catalyses (S)-4-amino-5-oxopentanoate + tRNA(Glu) + NADP(+) = L-glutamyl-tRNA(Glu) + NADPH + H(+). The protein operates within porphyrin-containing compound metabolism; protoporphyrin-IX biosynthesis; 5-aminolevulinate from L-glutamyl-tRNA(Glu): step 1/2. Catalyzes the NADPH-dependent reduction of glutamyl-tRNA(Glu) to glutamate 1-semialdehyde (GSA). The chain is Glutamyl-tRNA reductase from Paenibacillus macerans (Bacillus macerans).